We begin with the raw amino-acid sequence, 163 residues long: SsrA-binding protein (163 aa).

Residues 140 to 157 show a composition bias toward basic and acidic residues; sequence RRGAIAERESKREMDRAL. A disordered region spans residues 140–163; that stretch reads RRGAIAERESKREMDRALARGRRR.

It belongs to the SmpB family.

Its subcellular location is the cytoplasm. Functionally, required for rescue of stalled ribosomes mediated by trans-translation. Binds to transfer-messenger RNA (tmRNA), required for stable association of tmRNA with ribosomes. tmRNA and SmpB together mimic tRNA shape, replacing the anticodon stem-loop with SmpB. tmRNA is encoded by the ssrA gene; the 2 termini fold to resemble tRNA(Ala) and it encodes a 'tag peptide', a short internal open reading frame. During trans-translation Ala-aminoacylated tmRNA acts like a tRNA, entering the A-site of stalled ribosomes, displacing the stalled mRNA. The ribosome then switches to translate the ORF on the tmRNA; the nascent peptide is terminated with the 'tag peptide' encoded by the tmRNA and targeted for degradation. The ribosome is freed to recommence translation, which seems to be the essential function of trans-translation. In Anaeromyxobacter dehalogenans (strain 2CP-C), this protein is SsrA-binding protein.